The primary structure comprises 454 residues: Bifunctional protein GlmU (454 aa).

Positions 1–226 (MALNVVILAA…AIEVEGANNR (226 aa)) are pyrophosphorylase. UDP-N-acetyl-alpha-D-glucosamine contacts are provided by residues 8-11 (LAAG), K22, Q73, 78-79 (GT), 100-102 (YGD), G137, E151, N166, and N224. Position 102 (D102) interacts with Mg(2+). N224 serves as a coordination point for Mg(2+). The linker stretch occupies residues 227–247 (VQLAQLERAYQARAAEKLMLE). Positions 248–454 (GANLRDPARI…GWTRPVKQKK (207 aa)) are N-acetyltransferase. R330 and K348 together coordinate UDP-N-acetyl-alpha-D-glucosamine. The Proton acceptor role is filled by H360. Residues Y363 and N374 each contribute to the UDP-N-acetyl-alpha-D-glucosamine site. Acetyl-CoA contacts are provided by residues A377, 383-384 (NY), S402, A420, and R437.

The protein in the N-terminal section; belongs to the N-acetylglucosamine-1-phosphate uridyltransferase family. This sequence in the C-terminal section; belongs to the transferase hexapeptide repeat family. Homotrimer. Requires Mg(2+) as cofactor.

It is found in the cytoplasm. It catalyses the reaction alpha-D-glucosamine 1-phosphate + acetyl-CoA = N-acetyl-alpha-D-glucosamine 1-phosphate + CoA + H(+). The enzyme catalyses N-acetyl-alpha-D-glucosamine 1-phosphate + UTP + H(+) = UDP-N-acetyl-alpha-D-glucosamine + diphosphate. It participates in nucleotide-sugar biosynthesis; UDP-N-acetyl-alpha-D-glucosamine biosynthesis; N-acetyl-alpha-D-glucosamine 1-phosphate from alpha-D-glucosamine 6-phosphate (route II): step 2/2. Its pathway is nucleotide-sugar biosynthesis; UDP-N-acetyl-alpha-D-glucosamine biosynthesis; UDP-N-acetyl-alpha-D-glucosamine from N-acetyl-alpha-D-glucosamine 1-phosphate: step 1/1. The protein operates within bacterial outer membrane biogenesis; LPS lipid A biosynthesis. Functionally, catalyzes the last two sequential reactions in the de novo biosynthetic pathway for UDP-N-acetylglucosamine (UDP-GlcNAc). The C-terminal domain catalyzes the transfer of acetyl group from acetyl coenzyme A to glucosamine-1-phosphate (GlcN-1-P) to produce N-acetylglucosamine-1-phosphate (GlcNAc-1-P), which is converted into UDP-GlcNAc by the transfer of uridine 5-monophosphate (from uridine 5-triphosphate), a reaction catalyzed by the N-terminal domain. This Shewanella loihica (strain ATCC BAA-1088 / PV-4) protein is Bifunctional protein GlmU.